We begin with the raw amino-acid sequence, 309 residues long: Homoserine O-succinyltransferase (309 aa).

C142 acts as the Acyl-thioester intermediate in catalysis. Substrate-binding residues include K163 and S192. The Proton acceptor role is filled by H235. E237 is a catalytic residue. Substrate is bound at residue R249.

Belongs to the MetA family.

The protein localises to the cytoplasm. It carries out the reaction L-homoserine + succinyl-CoA = O-succinyl-L-homoserine + CoA. The protein operates within amino-acid biosynthesis; L-methionine biosynthesis via de novo pathway; O-succinyl-L-homoserine from L-homoserine: step 1/1. Its function is as follows. Transfers a succinyl group from succinyl-CoA to L-homoserine, forming succinyl-L-homoserine. This is Homoserine O-succinyltransferase from Klebsiella pneumoniae (strain 342).